The chain runs to 321 residues: tRNA U34 carboxymethyltransferase (321 aa).

Residues lysine 90, tryptophan 104, lysine 109, glycine 129, 151-153, 180-181, methionine 195, tyrosine 199, and arginine 314 contribute to the carboxy-S-adenosyl-L-methionine site; these read DPT and IE.

This sequence belongs to the class I-like SAM-binding methyltransferase superfamily. CmoB family. As to quaternary structure, homotetramer.

The enzyme catalyses carboxy-S-adenosyl-L-methionine + 5-hydroxyuridine(34) in tRNA = 5-carboxymethoxyuridine(34) in tRNA + S-adenosyl-L-homocysteine + H(+). Its function is as follows. Catalyzes carboxymethyl transfer from carboxy-S-adenosyl-L-methionine (Cx-SAM) to 5-hydroxyuridine (ho5U) to form 5-carboxymethoxyuridine (cmo5U) at position 34 in tRNAs. This Haemophilus influenzae (strain PittGG) protein is tRNA U34 carboxymethyltransferase.